Consider the following 262-residue polypeptide: MIDETAYIHPSAIVEDGAVIGANVRIGPFCCIGSQVEIGEGTELKSHVVVNGITKIGRDNQIFQFASIGEMNQDLKYHGEPTRVEIGDRNRIRESVTIHRGTVQGGGVTKIGNDNLLMVNAHIAHDCIVGDRCVIANNGTLGGHVILGDYVIIGGMSAIHQFCQIGSHAMVGGCSGVVQDIPPYVIAQGNHATPFGTNVEGLKRRGFDKDSLNVIRNAYKILYRNGKTLEEAQQEIAELAENNQHVKIFSDFLANSTRGIVR.

It belongs to the transferase hexapeptide repeat family. LpxA subfamily. As to quaternary structure, homotrimer.

It is found in the cytoplasm. The enzyme catalyses a (3R)-hydroxyacyl-[ACP] + UDP-N-acetyl-alpha-D-glucosamine = a UDP-3-O-[(3R)-3-hydroxyacyl]-N-acetyl-alpha-D-glucosamine + holo-[ACP]. It functions in the pathway glycolipid biosynthesis; lipid IV(A) biosynthesis; lipid IV(A) from (3R)-3-hydroxytetradecanoyl-[acyl-carrier-protein] and UDP-N-acetyl-alpha-D-glucosamine: step 1/6. In terms of biological role, involved in the biosynthesis of lipid A, a phosphorylated glycolipid that anchors the lipopolysaccharide to the outer membrane of the cell. In Photorhabdus laumondii subsp. laumondii (strain DSM 15139 / CIP 105565 / TT01) (Photorhabdus luminescens subsp. laumondii), this protein is Acyl-[acyl-carrier-protein]--UDP-N-acetylglucosamine O-acyltransferase.